The sequence spans 329 residues: GTP 3',8-cyclase (329 aa).

One can recognise a Radical SAM core domain in the interval 8–229; it reads AFARTFYYLR…AGWQRRLPGR (222 aa). Arg-17 provides a ligand contact to GTP. [4Fe-4S] cluster-binding residues include Cys-24 and Cys-28. Residue Tyr-30 coordinates S-adenosyl-L-methionine. Cys-31 serves as a coordination point for [4Fe-4S] cluster. Arg-68 is a binding site for GTP. S-adenosyl-L-methionine is bound at residue Gly-72. Position 99 (Thr-99) interacts with GTP. Ser-123 contacts S-adenosyl-L-methionine. Lys-160 serves as a coordination point for GTP. Met-194 is an S-adenosyl-L-methionine binding site. Positions 257 and 260 each coordinate [4Fe-4S] cluster. 262–264 contributes to the GTP binding site; the sequence is RLR. Residue Cys-274 participates in [4Fe-4S] cluster binding.

Belongs to the radical SAM superfamily. MoaA family. Monomer and homodimer. The cofactor is [4Fe-4S] cluster.

The enzyme catalyses GTP + AH2 + S-adenosyl-L-methionine = (8S)-3',8-cyclo-7,8-dihydroguanosine 5'-triphosphate + 5'-deoxyadenosine + L-methionine + A + H(+). It functions in the pathway cofactor biosynthesis; molybdopterin biosynthesis. Its function is as follows. Catalyzes the cyclization of GTP to (8S)-3',8-cyclo-7,8-dihydroguanosine 5'-triphosphate. This chain is GTP 3',8-cyclase, found in Edwardsiella ictaluri (strain 93-146).